A 394-amino-acid polypeptide reads, in one-letter code: Flavohemoprotein (394 aa).

Residues Met1 to Gly138 form the Globin domain. His85 provides a ligand contact to heme b. Active-site charge relay system residues include Tyr95 and Glu137. Positions Gly149–Ala394 are reductase. The region spanning Arg152–Val262 is the FAD-binding FR-type domain. FAD-binding positions include Tyr190 and Arg206–Ser209. Residue Gly274 to Pro279 participates in NADP(+) binding. Val385–Pro388 contacts FAD.

It belongs to the globin family. Two-domain flavohemoproteins subfamily. The protein in the C-terminal section; belongs to the flavoprotein pyridine nucleotide cytochrome reductase family. The cofactor is heme b. It depends on FAD as a cofactor.

It catalyses the reaction 2 nitric oxide + NADPH + 2 O2 = 2 nitrate + NADP(+) + H(+). The catalysed reaction is 2 nitric oxide + NADH + 2 O2 = 2 nitrate + NAD(+) + H(+). Functionally, is involved in NO detoxification in an aerobic process, termed nitric oxide dioxygenase (NOD) reaction that utilizes O(2) and NAD(P)H to convert NO to nitrate, which protects the bacterium from various noxious nitrogen compounds. Therefore, plays a central role in the inducible response to nitrosative stress. This Vibrio cholerae serotype O1 (strain ATCC 39315 / El Tor Inaba N16961) protein is Flavohemoprotein (hmp).